The sequence spans 233 residues: Glyceraldehyde-3-phosphate dehydrogenase A, chloroplastic (233 aa).

Residues 49–51 (SCT), threonine 80, arginine 95, 108–109 (TG), and arginine 131 contribute to the D-glyceraldehyde 3-phosphate site. Residue cysteine 50 is the Nucleophile of the active site. Asparagine 213 is an NADP(+) binding site.

This sequence belongs to the glyceraldehyde-3-phosphate dehydrogenase family. As to quaternary structure, tetramer of either four A chains (GAPDH 2) or two A and two B chains (GAPDH 1).

The protein resides in the plastid. It localises to the chloroplast. The catalysed reaction is D-glyceraldehyde 3-phosphate + phosphate + NADP(+) = (2R)-3-phospho-glyceroyl phosphate + NADPH + H(+). It functions in the pathway carbohydrate biosynthesis; Calvin cycle. This chain is Glyceraldehyde-3-phosphate dehydrogenase A, chloroplastic (GAPA), found in Sinapis alba (White mustard).